The chain runs to 118 residues: Large ribosomal subunit protein uL24 (118 aa).

Belongs to the universal ribosomal protein uL24 family. As to quaternary structure, part of the 50S ribosomal subunit.

Its function is as follows. One of two assembly initiator proteins, it binds directly to the 5'-end of the 23S rRNA, where it nucleates assembly of the 50S subunit. Functionally, one of the proteins that surrounds the polypeptide exit tunnel on the outside of the subunit. The chain is Large ribosomal subunit protein uL24 from Synechococcus sp. (strain CC9605).